The sequence spans 248 residues: tRNA (guanine-N(1)-)-methyltransferase (248 aa).

Residues glycine 116 and 136–141 (VGDYVL) contribute to the S-adenosyl-L-methionine site.

This sequence belongs to the RNA methyltransferase TrmD family. As to quaternary structure, homodimer.

The protein resides in the cytoplasm. The enzyme catalyses guanosine(37) in tRNA + S-adenosyl-L-methionine = N(1)-methylguanosine(37) in tRNA + S-adenosyl-L-homocysteine + H(+). Functionally, specifically methylates guanosine-37 in various tRNAs. The sequence is that of tRNA (guanine-N(1)-)-methyltransferase from Psychromonas ingrahamii (strain DSM 17664 / CCUG 51855 / 37).